Consider the following 667-residue polypeptide: DNA ligase (667 aa).

NAD(+) contacts are provided by residues 32–36 (DSEYD), 81–82 (SL), and E110. K112 serves as the catalytic N6-AMP-lysine intermediate. 4 residues coordinate NAD(+): R133, E167, K283, and K307. Zn(2+)-binding residues include C401, C404, C419, and C424. The BRCT domain occupies 586–667 (EGHPEFSGKT…FVDKQNELNS (82 aa)).

The protein belongs to the NAD-dependent DNA ligase family. LigA subfamily. It depends on Mg(2+) as a cofactor. The cofactor is Mn(2+).

The catalysed reaction is NAD(+) + (deoxyribonucleotide)n-3'-hydroxyl + 5'-phospho-(deoxyribonucleotide)m = (deoxyribonucleotide)n+m + AMP + beta-nicotinamide D-nucleotide.. In terms of biological role, DNA ligase that catalyzes the formation of phosphodiester linkages between 5'-phosphoryl and 3'-hydroxyl groups in double-stranded DNA using NAD as a coenzyme and as the energy source for the reaction. It is essential for DNA replication and repair of damaged DNA. The chain is DNA ligase from Staphylococcus aureus (strain bovine RF122 / ET3-1).